The primary structure comprises 440 residues: Xaa-Pro dipeptidase (440 aa).

The Mn(2+) site is built by Asp241, Asp252, His333, Glu378, and Glu417.

The protein belongs to the peptidase M24B family. Bacterial-type prolidase subfamily. Mn(2+) is required as a cofactor.

The catalysed reaction is Xaa-L-Pro dipeptide + H2O = an L-alpha-amino acid + L-proline. Its function is as follows. Splits dipeptides with a prolyl residue in the C-terminal position. In Glaesserella parasuis serovar 5 (strain SH0165) (Haemophilus parasuis), this protein is Xaa-Pro dipeptidase.